Here is a 204-residue protein sequence, read N- to C-terminus: MVSDGGGQTDNNAEGGNLRIALTKNAFNPNQSTTVDIPYKIENRSVGNNKEQKTLVFDFSGLNPYEYNMIVGALFTDSSFINDAYAPIQSTFQRQLKEFLQVKYENQVGANGSFDLFKPRSLSSQQLVQGERSLDGFTVELNANGGSFNFLTHVDPLVAGLTVAAIASVVVAGAVTYLVVRRYRKRNEFVDKIFASNIRAKQWR.

A helical membrane pass occupies residues 160–180; the sequence is GLTVAAIASVVVAGAVTYLVV.

It to M.pneumoniae MPN_373 C-terminal region.

It localises to the cell membrane. This is an uncharacterized protein from Mycoplasma pneumoniae (strain ATCC 29342 / M129 / Subtype 1) (Mycoplasmoides pneumoniae).